The chain runs to 142 residues: Large ribosomal subunit protein uL11 (142 aa).

This sequence belongs to the universal ribosomal protein uL11 family. As to quaternary structure, part of the ribosomal stalk of the 50S ribosomal subunit. Interacts with L10 and the large rRNA to form the base of the stalk. L10 forms an elongated spine to which L12 dimers bind in a sequential fashion forming a multimeric L10(L12)X complex. One or more lysine residues are methylated.

Forms part of the ribosomal stalk which helps the ribosome interact with GTP-bound translation factors. The protein is Large ribosomal subunit protein uL11 of Shewanella oneidensis (strain ATCC 700550 / JCM 31522 / CIP 106686 / LMG 19005 / NCIMB 14063 / MR-1).